A 182-amino-acid chain; its full sequence is Protein Syd (182 aa).

Belongs to the Syd family.

It is found in the cell inner membrane. Its function is as follows. Interacts with the SecY protein in vivo. May bind preferentially to an uncomplexed state of SecY, thus functioning either as a chelating agent for excess SecY in the cell or as a regulatory factor that negatively controls the translocase function. This Pectobacterium carotovorum subsp. carotovorum (strain PC1) protein is Protein Syd.